Consider the following 455-residue polypeptide: Probable xyloglucan galactosyltransferase GT17 (455 aa).

The Cytoplasmic portion of the chain corresponds to Met1–Thr34. A helical; Signal-anchor for type II membrane protein membrane pass occupies residues Leu35–Phe55. Residues Thr56–Leu455 lie on the Lumenal side of the membrane. N-linked (GlcNAc...) asparagine glycans are attached at residues Asn70, Asn169, Asn230, Asn390, and Asn426.

This sequence belongs to the glycosyltransferase 47 family. As to expression, expressed in roots and hypocotyls.

It is found in the golgi apparatus membrane. Functions in xyloglucan synthesis by adding side chains to the xylosylated glucan backbone. Involved in the galactosylation of hemicellulose xyloglucan. The protein is Probable xyloglucan galactosyltransferase GT17 of Arabidopsis thaliana (Mouse-ear cress).